A 122-amino-acid chain; its full sequence is Cytochrome b-c1 complex subunit 7-1, mitochondrial (122 aa).

The protein belongs to the UQCRB/QCR7 family. As to quaternary structure, component of the ubiquinol-cytochrome c oxidoreductase (cytochrome b-c1 complex, complex III, CIII), a multisubunit enzyme composed of 10 subunits. The complex is composed of 3 respiratory subunits cytochrome b (MT-CYB), cytochrome c1 (CYC1-1 or CYC1-2) and Rieske protein (UCR1-1 or UCR1-2), 2 core protein subunits MPPalpha1 (or MPPalpha2) and MPPB, and 5 low-molecular weight protein subunits QCR7-1 (or QCR7-2), UCRQ-1 (or UCRQ-2), QCR9, UCRY and probably QCR6-1 (or QCR6-2). The complex exists as an obligatory dimer and forms supercomplexes (SCs) in the inner mitochondrial membrane with NADH-ubiquinone oxidoreductase (complex I, CI), resulting in different assemblies (supercomplexes SCI(1)III(2) and SCI(2)III(4)).

Its subcellular location is the mitochondrion inner membrane. Component of the ubiquinol-cytochrome c oxidoreductase, a multisubunit transmembrane complex that is part of the mitochondrial electron transport chain which drives oxidative phosphorylation. The respiratory chain contains 3 multisubunit complexes succinate dehydrogenase (complex II, CII), ubiquinol-cytochrome c oxidoreductase (cytochrome b-c1 complex, complex III, CIII) and cytochrome c oxidase (complex IV, CIV), that cooperate to transfer electrons derived from NADH and succinate to molecular oxygen, creating an electrochemical gradient over the inner membrane that drives transmembrane transport and the ATP synthase. The cytochrome b-c1 complex catalyzes electron transfer from ubiquinol to cytochrome c, linking this redox reaction to translocation of protons across the mitochondrial inner membrane, with protons being carried across the membrane as hydrogens on the quinol. In the process called Q cycle, 2 protons are consumed from the matrix, 4 protons are released into the intermembrane space and 2 electrons are passed to cytochrome c. This is Cytochrome b-c1 complex subunit 7-1, mitochondrial (QCR7-1) from Arabidopsis thaliana (Mouse-ear cress).